Reading from the N-terminus, the 89-residue chain is MPAPRYKSGSAKKVYKRAPGNRRVLHIRRKKQSSAKCGACGALLNGVPSLRTVQVSKLSKTQRRPERAFGGALCPKCVKKMMVVKARNY.

The protein belongs to the eukaryotic ribosomal protein eL34 family.

The protein is Large ribosomal subunit protein eL34 of Methanococcus vannielii (strain ATCC 35089 / DSM 1224 / JCM 13029 / OCM 148 / SB).